A 159-amino-acid chain; its full sequence is Neuroglobin (159 aa).

The region spanning 3-151 (KLSEKDKELI…VVAAMSQGWA (149 aa)) is the Globin domain. Heme b-binding residues include His-66 and His-98.

It belongs to the globin family. As to quaternary structure, monomer. Homodimers and homotetramers. Mainly monomeric but also detected as part of homodimers and homotetramers.

It is found in the cytoplasm. Its subcellular location is the cytosol. It localises to the mitochondrion matrix. It catalyses the reaction Fe(III)-heme b-[protein] + nitric oxide + H2O = Fe(II)-heme b-[protein] + nitrite + 2 H(+). Monomeric globin with a bis-histidyl six-coordinate heme-iron atom through which it can bind dioxygen, carbon monoxide and nitric oxide. Could help transport oxygen and increase its availability to the metabolically active neuronal tissues, though its low quantity in tissues as well as its high affinity for dioxygen, which may limit its oxygen-releasing ability, argue against it. The ferrous/deoxygenated form exhibits a nitrite reductase activity and it could produce nitric oxide which in turn inhibits cellular respiration in response to hypoxia. In its ferrous/deoxygenated state, it may also exhibit GDI (Guanine nucleotide Dissociation Inhibitor) activity toward heterotrimeric G-alpha proteins, thereby regulating signal transduction to facilitate neuroprotective responses in the wake of hypoxia and associated oxidative stress. The protein is Neuroglobin (ngb) of Dissostichus mawsoni (Antarctic cod).